Consider the following 354-residue polypeptide: Uroporphyrinogen decarboxylase (354 aa).

Residues 27 to 31 (RQAGR), Asp-77, Tyr-154, Thr-209, and His-327 each bind substrate.

It belongs to the uroporphyrinogen decarboxylase family. Homodimer.

The protein resides in the cytoplasm. It carries out the reaction uroporphyrinogen III + 4 H(+) = coproporphyrinogen III + 4 CO2. It participates in porphyrin-containing compound metabolism; protoporphyrin-IX biosynthesis; coproporphyrinogen-III from 5-aminolevulinate: step 4/4. In terms of biological role, catalyzes the decarboxylation of four acetate groups of uroporphyrinogen-III to yield coproporphyrinogen-III. The protein is Uroporphyrinogen decarboxylase of Cronobacter sakazakii (strain ATCC BAA-894) (Enterobacter sakazakii).